Consider the following 813-residue polypeptide: G-type lectin S-receptor-like serine/threonine-protein kinase LECRK1 (813 aa).

The first 19 residues, 1–19 (MVALLLFPMLLQLLSPTCA), serve as a signal peptide directing secretion. Over 20 to 466 (QTQKNITLGS…NRKHWVLGSS (447 aa)) the chain is Extracellular. Residues 22–149 (QKNITLGSTL…DGTTKWQTFD (128 aa)) form the Bulb-type lectin domain. N-linked (GlcNAc...) asparagine glycans are attached at residues N24, N57, N164, N168, N219, and N242. Residues 293-346 (PQNICHAIVSDVGSGVCGFNSYCTFDGTRNQIASCQCPPWYKFFDEQKKYKGCK) enclose the EGF-like; atypical domain. Intrachain disulfides connect C297–C315, C309–C327, C329–C345, C391–C413, and C395–C401. Residues 354-433 (CDLEEATALA…NMADYVQRTV (80 aa)) enclose the PAN domain. Residues N407 and N441 are each glycosylated (N-linked (GlcNAc...) asparagine). A helical transmembrane segment spans residues 467-487 (LILGTSILVNFALISIFLFGT). The Cytoplasmic portion of the chain corresponds to 488–813 (YCRITTKKNI…DPCSFISSLP (326 aa)). In terms of domain architecture, Protein kinase spans 523 to 797 (AGFHEILGAG…KVTQMLDGAV (275 aa)). ATP is bound by residues 529 to 537 (LGAGASGVV) and K553. The active-site Proton acceptor is D647.

Belongs to the protein kinase superfamily. Ser/Thr protein kinase family. In terms of assembly, interacts (via kinase domain) with ADF4. In terms of tissue distribution, expressed in plumules, radicles and panicles.

Its subcellular location is the membrane. The catalysed reaction is L-seryl-[protein] + ATP = O-phospho-L-seryl-[protein] + ADP + H(+). It carries out the reaction L-threonyl-[protein] + ATP = O-phospho-L-threonyl-[protein] + ADP + H(+). Involved in innate immunity. Required for the expression of defense-related genes PR1A, LOX2 and CHS1 upon biotic stresses. Required for basal resistance to the fungal blast (M.grisea), bacterial blight (O.oryzae pv. oryzae, Xoo) and the herbivorous insect brown planthopper (N.lugens, BPH). May be involved in several defense signaling pathways. Involved in the promotion of seed germination. Required for the expression of alpha-amylase genes during seed germination. Involved in resistance against the brown planthopper (BPH). Member of the BPH3 (BPH resistance locus 3) cluster which contains LECRK1, LECRK2 and LECRK3. The chain is G-type lectin S-receptor-like serine/threonine-protein kinase LECRK1 from Oryza sativa subsp. indica (Rice).